The following is a 153-amino-acid chain: MNKGCGSGSDSCLSSMEEELHVLAVDDNLIDRKLVERILKISSCKVTTAENGLRALEYLGLGDPQQTDSLTNVMKVNLIITDYCMPGMTGFELLKKVKESSNLKEVPVVILSSENIPTRINKCLASGAQMFMQKPLKLSDVEKLKCHLLNCRS.

A Response regulatory domain is found at 21 to 149; it reads HVLAVDDNLI…DVEKLKCHLL (129 aa). D82 is modified (4-aspartylphosphate).

It belongs to the ARR family. Type-A subfamily. Post-translationally, two-component system major event consists of a His-to-Asp phosphorelay between a sensor histidine kinase (HK) and a response regulator (RR). In plants, the His-to-Asp phosphorelay involves an additional intermediate named Histidine-containing phosphotransfer protein (HPt). This multistep phosphorelay consists of a His-Asp-His-Asp sequential transfer of a phosphate group between first a His and an Asp of the HK protein, followed by the transfer to a conserved His of the HPt protein and finally the transfer to an Asp in the receiver domain of the RR protein.

The protein localises to the nucleus. Functions as a response regulator involved in His-to-Asp phosphorelay signal transduction system. Phosphorylation of the Asp residue in the receiver domain activates the ability of the protein to promote the transcription of target genes. Type-A response regulators seem to act as negative regulators of the cytokinin signaling. This chain is Two-component response regulator ARR17 (ARR17), found in Arabidopsis thaliana (Mouse-ear cress).